We begin with the raw amino-acid sequence, 174 residues long: Large ribosomal subunit protein uL10 (174 aa).

The protein belongs to the universal ribosomal protein uL10 family. As to quaternary structure, part of the ribosomal stalk of the 50S ribosomal subunit. The N-terminus interacts with L11 and the large rRNA to form the base of the stalk. The C-terminus forms an elongated spine to which L12 dimers bind in a sequential fashion forming a multimeric L10(L12)X complex.

Forms part of the ribosomal stalk, playing a central role in the interaction of the ribosome with GTP-bound translation factors. This is Large ribosomal subunit protein uL10 from Nitrosospira multiformis (strain ATCC 25196 / NCIMB 11849 / C 71).